A 292-amino-acid polypeptide reads, in one-letter code: 4-amino-L-phenylalanine/4-methylamino-L-phenylalanine methyltransferase (292 aa).

128–132 (CAGPG) provides a ligand contact to S-adenosyl-L-methionine.

This sequence belongs to the protein N5-glutamine methyltransferase family.

The catalysed reaction is 4-amino-L-phenylalanine + S-adenosyl-L-methionine = 4-methylamino-L-phenylalanine + S-adenosyl-L-homocysteine + H(+). The enzyme catalyses 4-methylamino-L-phenylalanine + S-adenosyl-L-methionine = 4-dimethylamino-L-phenylalanine + S-adenosyl-L-homocysteine + H(+). It participates in antibiotic biosynthesis. Its function is as follows. Involved in pristinamycin I biosynthesis. Catalyzes the SAM-dependent methylation of 4-amino-L-phenylalanine (PAPA) to 4-methylamino-L-phenylalanine (MMPAPA), and of MMPAPA to 4-dimethylamino-L-phenylalanine (DMPAPA). This Streptomyces pristinaespiralis protein is 4-amino-L-phenylalanine/4-methylamino-L-phenylalanine methyltransferase.